We begin with the raw amino-acid sequence, 466 residues long: ATP-dependent protease ATPase subunit HslU (466 aa).

Residues Ile18, 60–65, Asp279, Glu344, and Arg416 each bind ATP; that span reads GVGKTE.

This sequence belongs to the ClpX chaperone family. HslU subfamily. In terms of assembly, a double ring-shaped homohexamer of HslV is capped on each side by a ring-shaped HslU homohexamer. The assembly of the HslU/HslV complex is dependent on binding of ATP.

The protein localises to the cytoplasm. ATPase subunit of a proteasome-like degradation complex; this subunit has chaperone activity. The binding of ATP and its subsequent hydrolysis by HslU are essential for unfolding of protein substrates subsequently hydrolyzed by HslV. HslU recognizes the N-terminal part of its protein substrates and unfolds these before they are guided to HslV for hydrolysis. The sequence is that of ATP-dependent protease ATPase subunit HslU from Lactobacillus acidophilus (strain ATCC 700396 / NCK56 / N2 / NCFM).